The sequence spans 251 residues: uncharacterized protein (251 aa).

Residue valine 14–valine 37 coordinates NADP(+). Serine 145 serves as a coordination point for substrate. Tyrosine 158 serves as the catalytic Proton acceptor.

It belongs to the short-chain dehydrogenases/reductases (SDR) family.

Its function is as follows. May be involved in the biosynthesis of a heptaene-type antibiotic. This is an uncharacterized protein from Streptomyces coelicolor.